The chain runs to 534 residues: Arginine--tRNA ligase (534 aa).

Residues 120–130 carry the 'HIGH' region motif; sequence ANPTGFLHLGH.

Belongs to the class-I aminoacyl-tRNA synthetase family. As to quaternary structure, monomer.

Its subcellular location is the cytoplasm. The enzyme catalyses tRNA(Arg) + L-arginine + ATP = L-arginyl-tRNA(Arg) + AMP + diphosphate. In Mesomycoplasma hyopneumoniae (strain J / ATCC 25934 / NCTC 10110) (Mycoplasma hyopneumoniae), this protein is Arginine--tRNA ligase.